We begin with the raw amino-acid sequence, 547 residues long: Chaperonin GroEL (547 aa).

ATP is bound by residues 30–33 (TLGP), lysine 51, 87–91 (DGTTT), glycine 415, and aspartate 495.

The protein belongs to the chaperonin (HSP60) family. In terms of assembly, forms a cylinder of 14 subunits composed of two heptameric rings stacked back-to-back. Interacts with the co-chaperonin GroES.

It is found in the cytoplasm. It carries out the reaction ATP + H2O + a folded polypeptide = ADP + phosphate + an unfolded polypeptide.. Functionally, together with its co-chaperonin GroES, plays an essential role in assisting protein folding. The GroEL-GroES system forms a nano-cage that allows encapsulation of the non-native substrate proteins and provides a physical environment optimized to promote and accelerate protein folding. In Ralstonia nicotianae (strain ATCC BAA-1114 / GMI1000) (Ralstonia solanacearum), this protein is Chaperonin GroEL.